The chain runs to 159 residues: Large ribosomal subunit protein uL11 (159 aa).

This sequence belongs to the universal ribosomal protein uL11 family. In terms of assembly, part of the ribosomal stalk of the 50S ribosomal subunit. Interacts with L10 and the large rRNA to form the base of the stalk. L10 forms an elongated spine to which L12 dimers bind in a sequential fashion forming a multimeric L10(L12)X complex.

Its function is as follows. Forms part of the ribosomal stalk which helps the ribosome interact with GTP-bound translation factors. The polypeptide is Large ribosomal subunit protein uL11 (Methanothrix thermoacetophila (strain DSM 6194 / JCM 14653 / NBRC 101360 / PT) (Methanosaeta thermophila)).